We begin with the raw amino-acid sequence, 844 residues long: DNA mismatch repair protein MutS (844 aa).

610 to 617 (GPNMGGKS) contacts ATP.

This sequence belongs to the DNA mismatch repair MutS family.

In terms of biological role, this protein is involved in the repair of mismatches in DNA. It is possible that it carries out the mismatch recognition step. This protein has a weak ATPase activity. This Francisella tularensis subsp. holarctica (strain FTNF002-00 / FTA) protein is DNA mismatch repair protein MutS.